Here is a 573-residue protein sequence, read N- to C-terminus: Dihydroxy-acid dehydratase (573 aa).

The segment covering 1–14 (MTEKSPKPHKRSDA) has biased composition (basic and acidic residues). The segment at 1–21 (MTEKSPKPHKRSDAITEGPNR) is disordered. Cys55 contributes to the [2Fe-2S] cluster binding site. Residue Asp87 coordinates Mg(2+). Cys128 serves as a coordination point for [2Fe-2S] cluster. Asp129 and Lys130 together coordinate Mg(2+). Lys130 carries the N6-carboxylysine modification. Cys200 is a [2Fe-2S] cluster binding site. Position 450 (Glu450) interacts with Mg(2+). Ser476 functions as the Proton acceptor in the catalytic mechanism.

The protein belongs to the IlvD/Edd family. As to quaternary structure, homodimer. [2Fe-2S] cluster is required as a cofactor. It depends on Mg(2+) as a cofactor.

It carries out the reaction (2R)-2,3-dihydroxy-3-methylbutanoate = 3-methyl-2-oxobutanoate + H2O. It catalyses the reaction (2R,3R)-2,3-dihydroxy-3-methylpentanoate = (S)-3-methyl-2-oxopentanoate + H2O. It functions in the pathway amino-acid biosynthesis; L-isoleucine biosynthesis; L-isoleucine from 2-oxobutanoate: step 3/4. It participates in amino-acid biosynthesis; L-valine biosynthesis; L-valine from pyruvate: step 3/4. Functions in the biosynthesis of branched-chain amino acids. Catalyzes the dehydration of (2R,3R)-2,3-dihydroxy-3-methylpentanoate (2,3-dihydroxy-3-methylvalerate) into 2-oxo-3-methylpentanoate (2-oxo-3-methylvalerate) and of (2R)-2,3-dihydroxy-3-methylbutanoate (2,3-dihydroxyisovalerate) into 2-oxo-3-methylbutanoate (2-oxoisovalerate), the penultimate precursor to L-isoleucine and L-valine, respectively. This chain is Dihydroxy-acid dehydratase, found in Koribacter versatilis (strain Ellin345).